The following is a 144-amino-acid chain: MAYKHILIAVDLSPESKVLVEKAVSMARPYNAKVSLIHVDVNYSDLYTGLIDVNLGDMQKRISEETHHALTELSTNAGYPITETLSGSGDLGQVLVDAIKKYDMDLVVCGHHQDFWSKLMSSARQLINTVHVDMLIVPLRDEEE.

It belongs to the universal stress protein A family. In terms of assembly, homodimer.

The protein resides in the cytoplasm. Required for resistance to DNA-damaging agents. The chain is Universal stress protein A (uspA) from Escherichia coli O6:H1 (strain CFT073 / ATCC 700928 / UPEC).